Reading from the N-terminus, the 438-residue chain is GDP-mannose 6-dehydrogenase (438 aa).

Tyr10, Val11, Asp30, Lys35, Thr86, and Thr124 together coordinate NAD(+). Glu161, Lys210, Asn214, His217, Asn225, Tyr256, Tyr257, Arg259, Phe262, and Gly265 together coordinate GDP-alpha-D-mannuronate. Cys268 is an active-site residue. Lys271 lines the NAD(+) pocket. GDP-alpha-D-mannuronate is bound at residue Lys324. Residue Arg331 participates in NAD(+) binding.

This sequence belongs to the UDP-glucose/GDP-mannose dehydrogenase family.

It catalyses the reaction GDP-alpha-D-mannose + 2 NAD(+) + H2O = GDP-alpha-D-mannuronate + 2 NADH + 3 H(+). It functions in the pathway glycan biosynthesis; alginate biosynthesis. In terms of biological role, catalyzes the oxidation of guanosine diphospho-D-mannose (GDP-D-mannose) to GDP-D-mannuronic acid, a precursor for alginate polymerization. The alginate layer causes a mucoid phenotype and provides a protective barrier against host immune defenses and antibiotics. The chain is GDP-mannose 6-dehydrogenase (algD) from Pseudomonas syringae pv. syringae.